The chain runs to 373 residues: sn-glycerol-3-phosphate import ATP-binding protein UgpC (373 aa).

Residues 4–235 (LTLSNITKSY…PASVFVATFI (232 aa)) form the ABC transporter domain. 37 to 44 (GPSGCGKS) contributes to the ATP binding site.

This sequence belongs to the ABC transporter superfamily. sn-glycerol-3-phosphate importer (TC 3.A.1.1.3) family. In terms of assembly, the complex is composed of two ATP-binding proteins (UgpC), two transmembrane proteins (UgpA and UgpE) and a solute-binding protein (UgpB).

It localises to the cell inner membrane. It catalyses the reaction sn-glycerol 3-phosphate(out) + ATP + H2O = sn-glycerol 3-phosphate(in) + ADP + phosphate + H(+). Functionally, part of the ABC transporter complex UgpBAEC involved in sn-glycerol-3-phosphate (G3P) import. Responsible for energy coupling to the transport system. This chain is sn-glycerol-3-phosphate import ATP-binding protein UgpC, found in Psychromonas ingrahamii (strain DSM 17664 / CCUG 51855 / 37).